A 1282-amino-acid polypeptide reads, in one-letter code: Indigoidine synthase (1282 aa).

The segment at Ala-24–Leu-379 is adenylation. In terms of domain architecture, Carrier spans Ala-937 to Val-1012. Ser-972 bears the O-(pantetheine 4'-phosphoryl)serine mark. Residues Arg-1030 to Glu-1138 form a thioesterase region.

This sequence belongs to the ATP-dependent AMP-binding enzyme family. Pantetheine 4'-phosphate serves as cofactor.

It carries out the reaction 2 FMN + 2 L-glutamine + 2 ATP + O2 = indigoidine + 2 FMNH2 + 2 AMP + 2 diphosphate + 2 H2O. The catalysed reaction is FMN + L-glutamine + ATP = 3-amino-1,5-dihydropyridine-2,6-dione + FMNH2 + AMP + diphosphate. It catalyses the reaction 2 3-amino-1,5-dihydropyridine-2,6-dione + O2 = indigoidine + 2 H2O. Its pathway is pigment biosynthesis. Nonribosomal peptide synthetase involved in the biosynthesis of the blue pigment indigoidine. Catalyzes the synthesis of the blue pigment using L-Gln as a substrate. Two glutamine molecules are cyclized and oxidized to form indigoidine. This Streptomyces lavendulae protein is Indigoidine synthase.